The chain runs to 140 residues: Large ribosomal subunit protein uL22c (140 aa).

Belongs to the universal ribosomal protein uL22 family. Part of the 50S ribosomal subunit.

It localises to the plastid. The protein localises to the chloroplast. Functionally, this protein binds specifically to 23S rRNA. In terms of biological role, the globular domain of the protein is located near the polypeptide exit tunnel on the outside of the subunit, while an extended beta-hairpin is found that lines the wall of the exit tunnel in the center of the 70S ribosome. The chain is Large ribosomal subunit protein uL22c (rpl22) from Calycanthus floridus var. glaucus (Eastern sweetshrub).